A 103-amino-acid polypeptide reads, in one-letter code: NADH-quinone oxidoreductase subunit K (103 aa).

3 helical membrane-spanning segments follow: residues 7 to 27, 31 to 51, and 65 to 85; these read TEHG…GVLV, LIFM…AFIV, and FMLI…LILL.

The protein belongs to the complex I subunit 4L family. NDH-1 is composed of 14 different subunits. Subunits NuoA, H, J, K, L, M, N constitute the membrane sector of the complex.

Its subcellular location is the cell inner membrane. It catalyses the reaction a quinone + NADH + 5 H(+)(in) = a quinol + NAD(+) + 4 H(+)(out). Its function is as follows. NDH-1 shuttles electrons from NADH, via FMN and iron-sulfur (Fe-S) centers, to quinones in the respiratory chain. The immediate electron acceptor for the enzyme in this species is believed to be ubiquinone. Couples the redox reaction to proton translocation (for every two electrons transferred, four hydrogen ions are translocated across the cytoplasmic membrane), and thus conserves the redox energy in a proton gradient. This chain is NADH-quinone oxidoreductase subunit K, found in Nitrosococcus oceani (strain ATCC 19707 / BCRC 17464 / JCM 30415 / NCIMB 11848 / C-107).